The chain runs to 848 residues: MYLYIETLKQRLDAINQLRVDRALAAMGPTFQKVYSLLPTLLHCHHPLMPGYLDGNVPHGVCLFTPNETQQDYLSEVEAKWGEPLQQSVGGELPITGVYSMGSTSSIGQCHTSDLDVWVCHQAWLDSEERNRLQEKCSLLEKWAASMGVEVSFFLIDENRFRHNASGSLGGEDCGSTQHILLLDEFYRSAVRLAGKRILWNMVPVEEENNYDDYVLSLYAQGVLTPNEWLDLGGLSTLSAEEYFGASLWQLYKSIDSPYKAVLKTLLLEAYSWEYPNSQLLAMEIKQRLHAGEIVAFGLDAYCMMLDRVTRYLTQINDTTRLNLVRRCFYLKVCEKLSRSPASVGWRREILSQLVSEWGWSDESLAVLDNRANWKIERVREAHNELLDAMMQSYRNLIRFARRNNLSVSASPQDIGVLTRKLYAAFEALPGKVTLVNPQISPDLSEEHLTFIHVPAGRANRAGWYLYNQAPSMDAIVSHQPLEYNRYLNKLVSWAYFNGLLTSKTRLHIKSANLCDTVKLQELVTDISHHFPLRLPAPTPKALYSPCEIRHLAIIVNLEHDPTAAFRNQVVHFDFRKLDVFSFGEQQQCLVGSIDLLYRNSWNEVRTLHFSGEQAVLEALKTILGKMHQDAAPPESVDVFCYSQHLRGLIRTRIQQLVSECIELRLSSTRQEPGRFKAVRVSGHTWGLFFERLSVSVQKLENAVEFYGAISNNKLHGLSIQVETDQIHLPPVVDGFASEGIIQFFFEGTADEKGFNIYILDESNRVEVYHHCEGSKEALVRDVSRFYSSSHDRFTYGSSFINFNLPQFYQIVQLDGRTQVIPFRSNTLSHLYIVDREPSQPAQQFQLH.

Residues Met-1 to Leu-535 form a catalytic region. A regulatory region spans residues Lys-541–His-848.

This sequence belongs to the adenylyl cyclase class-1 family.

The protein resides in the cytoplasm. The enzyme catalyses ATP = 3',5'-cyclic AMP + diphosphate. With respect to regulation, the regulatory domain is involved in the regulation of cyclase activity by the carbon source. The chain is Adenylate cyclase (cya) from Yersinia intermedia.